The primary structure comprises 363 residues: NudC domain-containing protein 3 (363 aa).

Residues 120 to 143 (AADLSGPQEVEKEEPPGSQDPEHT) are disordered. Basic and acidic residues predominate over residues 128-143 (EVEKEEPPGSQDPEHT). The 93-residue stretch at 187-279 (AIRENYIWSQ…VGEYWWSAIL (93 aa)) folds into the CS domain. Ser342 and Ser357 each carry phosphoserine.

This is NudC domain-containing protein 3 (Nudcd3) from Mus musculus (Mouse).